Reading from the N-terminus, the 387-residue chain is MRILKSHPLLKLVNSYLIDASQPSNISYLWNFGSLLLLCLIIQIITGVTLAMHYSPNVLEAFNSIEHIMRDVNNGWLVRYLHSNTASAFFFLVYLHIGRGMYYGSYRAPRTLVWAIGTVILIVMIVTAFLGYVLPYGQMSLWGATVITNLVSAIPWIGQDIVEFIWGGFSVNNATLNRFFALHYLLPFILVALVLMHLIALHDTAGSSNPLGISGNYDRITFAPYYLFKDLITIFIFIFVLSSFVFFMSNVLGDSENYIMANPMQTPAAIVPEWYLLPFYAILRSIPNKLLGVIAMFAAILAIMLLPITDLGRSKGLQFRPLSKFAFWVFVVNFLILMKLGACHVETPFIELGQLSTALYFGHFIIIVPIISLIENTLVDLNTMSKG.

A run of 4 helical transmembrane segments spans residues 32–52 (FGSLLLLCLIIQIITGVTLAM), 76–98 (WLVRYLHSNTASAFFFLVYLHIG), 113–133 (VWAIGTVILIVMIVTAFLGYV), and 179–199 (FFALHYLLPFILVALVLMHLI). Heme b contacts are provided by histidine 82 and histidine 96. Positions 183 and 197 each coordinate heme b. Residue histidine 202 participates in a ubiquinone binding. A run of 4 helical transmembrane segments spans residues 226-246 (YLFKDLITIFIFIFVLSSFVF), 290-310 (LLGVIAMFAAILAIMLLPITD), 322-342 (LSKFAFWVFVVNFLILMKLGA), and 349-369 (FIELGQLSTALYFGHFIIIVP).

This sequence belongs to the cytochrome b family. As to quaternary structure, fungal cytochrome b-c1 complex contains 10 subunits; 3 respiratory subunits, 2 core proteins and 5 low-molecular weight proteins. Cytochrome b-c1 complex is a homodimer. Heme b serves as cofactor.

Its subcellular location is the mitochondrion inner membrane. Its function is as follows. Component of the ubiquinol-cytochrome c reductase complex (complex III or cytochrome b-c1 complex) that is part of the mitochondrial respiratory chain. The b-c1 complex mediates electron transfer from ubiquinol to cytochrome c. Contributes to the generation of a proton gradient across the mitochondrial membrane that is then used for ATP synthesis. The polypeptide is Cytochrome b (COB) (Podospora anserina (strain S / ATCC MYA-4624 / DSM 980 / FGSC 10383) (Pleurage anserina)).